Reading from the N-terminus, the 329-residue chain is U5 small nuclear ribonucleoprotein TSSC4 (329 aa).

Disordered stretches follow at residues 1 to 88 and 104 to 156; these read MAEA…MSST and ARRA…PDYV. Low complexity predominate over residues 22-41; the sequence is DTLPSDTVSLSDSDSDLSLP. 6 positions are modified to phosphoserine: Ser-60, Ser-67, Ser-86, Ser-132, Ser-143, and Ser-146. Residues 77–104 are hom2; mediates interaction with the U5 snRNP complexes and required for spliceosomal tri-snRNP complex assembly; that stretch reads VQPFHLRGMSSTFSQRSRDIFDCLEGAA. An interaction with SNRNP200 region spans residues 149–316; the sequence is VPPVPDYVAH…SRKRSRDHFR (168 aa). Positions 150–186 are hom3; mediates interaction with the U5 snRNP complexes; it reads PPVPDYVAHPERWTKYSLEDVTEVSEQSNQATALAFL. Residues 201-250 form a hom4; necessary for interaction with the PRPF19 complex and required for spliceosomal tri-snRNP complex assembly region; the sequence is FNQDPSSCGEGRVIFTKPVRGVEARHERKRVLGKVGEPGRGGLGNPATDR. Lys-217 bears the N6-acetyllysine mark. A disordered region spans residues 221–329; sequence GVEARHERKR…SSPEDPGAEV (109 aa). Phosphoserine is present on Ser-265. The span at 306–317 shows a compositional bias: basic residues; the sequence is GSRKRSRDHFRN. Phosphoserine is present on Ser-321.

Belongs to the TSSC4 family. In terms of assembly, interacts in a RNA-independent manner with distinct U5 snRNP-containing complexes, the mono-U5 snRNP and the post-splicing U5 snRNP-PRPF19 complex. Interacts with SNRNP200; the interaction is direct, excludes recruitment of C9ORF78 and WBP4 to SNRNP200 and negatively regulates its RNA helicase activity. Interacts with PRPF8; the interaction is direct. In terms of tissue distribution, expressed in fetal brain, lung, liver and kidney. Widely expressed in adult tissues.

It localises to the nucleus. The protein resides in the cytoplasm. Its function is as follows. Protein associated with the U5 snRNP, during its maturation and its post-splicing recycling and which is required for spliceosomal tri-snRNP complex assembly in the nucleus. Has a molecular sequestering activity and transiently hinders SNRNP200 binding sites for constitutive splicing factors that intervene later during the assembly of the spliceosome and splicing. Together with its molecular sequestering activity, may also function as a molecular adapter and placeholder, coordinating the assembly of the U5 snRNP and its association with the U4/U6 di-snRNP. The protein is U5 small nuclear ribonucleoprotein TSSC4 of Homo sapiens (Human).